The primary structure comprises 181 residues: Bifunctional protein PyrR (181 aa).

Substrate is bound by residues 41-42, 105-113, R138, and V162; these read TR and DDVLYTGRT. The PRPP-binding motif lies at 101 to 113; sequence VILVDDVLYTGRT.

The protein belongs to the purine/pyrimidine phosphoribosyltransferase family. PyrR subfamily. Homodimer and homohexamer; in equilibrium.

The catalysed reaction is UMP + diphosphate = 5-phospho-alpha-D-ribose 1-diphosphate + uracil. Functionally, regulates transcriptional attenuation of the pyrimidine nucleotide (pyr) operon by binding in a uridine-dependent manner to specific sites on pyr mRNA. This disrupts an antiterminator hairpin in the RNA and favors formation of a downstream transcription terminator, leading to a reduced expression of downstream genes. Its function is as follows. Also displays a weak uracil phosphoribosyltransferase activity which is not physiologically significant. The polypeptide is Bifunctional protein PyrR (pyrR) (Bacillus subtilis (strain 168)).